A 942-amino-acid chain; its full sequence is Eukaryotic translation initiation factor 3 subunit A (942 aa).

The PCI domain occupies 320–494 (FKKYSSIILL…NTVTFFKDPF (175 aa)). 4 coiled-coil regions span residues 499–529 (KAAG…GEEI), 588–669 (ITQT…KQRE), 705–734 (SKLS…AYRK), and 821–912 (IEEV…RKAQ). Residues 502 to 546 (GTVEEEEEEEEEEGEEVEGEEAETGEEIVEEGEEHENEENKEPEP) are disordered. Positions 504–538 (VEEEEEEEEEEGEEVEGEEAETGEEIVEEGEEHEN) are enriched in acidic residues. Composition is skewed to basic and acidic residues over residues 836–870 (RKAE…ERKS) and 889–911 (RSAK…ERKA). Residues 836-942 (RKAEIEAEER…KMKLRRASKK (107 aa)) are disordered.

This sequence belongs to the eIF-3 subunit A family. In terms of assembly, component of the eukaryotic translation initiation factor 3 (eIF-3) complex.

Its subcellular location is the cytoplasm. Its function is as follows. RNA-binding component of the eukaryotic translation initiation factor 3 (eIF-3) complex, which is involved in protein synthesis of a specialized repertoire of mRNAs and, together with other initiation factors, stimulates binding of mRNA and methionyl-tRNAi to the 40S ribosome. The eIF-3 complex specifically targets and initiates translation of a subset of mRNAs involved in cell proliferation. The chain is Eukaryotic translation initiation factor 3 subunit A from Vanderwaltozyma polyspora (strain ATCC 22028 / DSM 70294 / BCRC 21397 / CBS 2163 / NBRC 10782 / NRRL Y-8283 / UCD 57-17) (Kluyveromyces polysporus).